The sequence spans 505 residues: Phosphomevalonate kinase, peroxisomal (505 aa).

Ala-2 is subject to N-acetylalanine. The Peroxisomal targeting signal PTS2 motif lies at 57 to 65; it reads DVKLTSPQL. Position 177–187 (177–187) interacts with ATP; it reads VAKTGLGSSAA.

Belongs to the GHMP kinase family. Mevalonate kinase subfamily.

The protein localises to the peroxisome. It catalyses the reaction (R)-5-phosphomevalonate + ATP = (R)-5-diphosphomevalonate + ADP. The protein operates within isoprenoid biosynthesis; isopentenyl diphosphate biosynthesis via mevalonate pathway; isopentenyl diphosphate from (R)-mevalonate: step 2/3. This chain is Phosphomevalonate kinase, peroxisomal, found in Arabidopsis thaliana (Mouse-ear cress).